A 553-amino-acid chain; its full sequence is CTP synthase (553 aa).

The segment at methionine 1–leucine 270 is amidoligase domain. Residue serine 13 participates in CTP binding. A UTP-binding site is contributed by serine 13. Residues serine 14–isoleucine 19 and aspartate 71 each bind ATP. Residues aspartate 71 and glutamate 144 each coordinate Mg(2+). CTP-binding positions include aspartate 151 to glutamate 153, lysine 191 to glutamine 196, and lysine 227. Residues lysine 191–glutamine 196 and lysine 227 each bind UTP. One can recognise a Glutamine amidotransferase type-1 domain in the interval threonine 295–threonine 547. Glycine 356 contacts L-glutamine. Cysteine 383 functions as the Nucleophile; for glutamine hydrolysis in the catalytic mechanism. L-glutamine is bound by residues leucine 384–glutamine 387, glutamate 407, and arginine 473. Active-site residues include histidine 520 and glutamate 522.

It belongs to the CTP synthase family. As to quaternary structure, homotetramer.

The enzyme catalyses UTP + L-glutamine + ATP + H2O = CTP + L-glutamate + ADP + phosphate + 2 H(+). The catalysed reaction is L-glutamine + H2O = L-glutamate + NH4(+). It catalyses the reaction UTP + NH4(+) + ATP = CTP + ADP + phosphate + 2 H(+). The protein operates within pyrimidine metabolism; CTP biosynthesis via de novo pathway; CTP from UDP: step 2/2. Its activity is regulated as follows. Allosterically activated by GTP, when glutamine is the substrate; GTP has no effect on the reaction when ammonia is the substrate. The allosteric effector GTP functions by stabilizing the protein conformation that binds the tetrahedral intermediate(s) formed during glutamine hydrolysis. Inhibited by the product CTP, via allosteric rather than competitive inhibition. In terms of biological role, catalyzes the ATP-dependent amination of UTP to CTP with either L-glutamine or ammonia as the source of nitrogen. Regulates intracellular CTP levels through interactions with the four ribonucleotide triphosphates. This chain is CTP synthase, found in Burkholderia mallei (strain NCTC 10229).